A 344-amino-acid polypeptide reads, in one-letter code: Uroporphyrinogen decarboxylase (344 aa).

Substrate contacts are provided by residues 26 to 30 (RQAGR), aspartate 76, tyrosine 152, serine 207, and histidine 323.

This sequence belongs to the uroporphyrinogen decarboxylase family. In terms of assembly, homodimer.

The protein localises to the cytoplasm. The catalysed reaction is uroporphyrinogen III + 4 H(+) = coproporphyrinogen III + 4 CO2. The protein operates within porphyrin-containing compound metabolism; protoporphyrin-IX biosynthesis; coproporphyrinogen-III from 5-aminolevulinate: step 4/4. In terms of biological role, catalyzes the decarboxylation of four acetate groups of uroporphyrinogen-III to yield coproporphyrinogen-III. The chain is Uroporphyrinogen decarboxylase from Hyphomonas neptunium (strain ATCC 15444).